Consider the following 365-residue polypeptide: Peptide chain release factor 2 (365 aa).

Gln-251 carries the post-translational modification N5-methylglutamine.

Belongs to the prokaryotic/mitochondrial release factor family. Methylated by PrmC. Methylation increases the termination efficiency of RF2.

It is found in the cytoplasm. Its function is as follows. Peptide chain release factor 2 directs the termination of translation in response to the peptide chain termination codons UGA and UAA. This is Peptide chain release factor 2 from Campylobacter jejuni subsp. jejuni serotype O:23/36 (strain 81-176).